A 387-amino-acid chain; its full sequence is Alkanesulfonate monooxygenase (387 aa).

This sequence belongs to the SsuD family.

It catalyses the reaction an alkanesulfonate + FMNH2 + O2 = an aldehyde + FMN + sulfite + H2O + 2 H(+). Catalyzes the desulfonation of aliphatic sulfonates. In Cupriavidus metallidurans (strain ATCC 43123 / DSM 2839 / NBRC 102507 / CH34) (Ralstonia metallidurans), this protein is Alkanesulfonate monooxygenase.